The sequence spans 110 residues: Thiosulfate sulfurtransferase GlpE (110 aa).

The Rhodanese domain occupies 17-105; sequence RENGAQVVDI…WRSVYPADTS (89 aa). Residue Cys-65 is the Cysteine persulfide intermediate of the active site.

It belongs to the GlpE family.

It is found in the cytoplasm. The catalysed reaction is thiosulfate + hydrogen cyanide = thiocyanate + sulfite + 2 H(+). The enzyme catalyses thiosulfate + [thioredoxin]-dithiol = [thioredoxin]-disulfide + hydrogen sulfide + sulfite + 2 H(+). In terms of biological role, transferase that catalyzes the transfer of sulfur from thiosulfate to thiophilic acceptors such as cyanide or dithiols. May function in a CysM-independent thiosulfate assimilation pathway by catalyzing the conversion of thiosulfate to sulfite, which can then be used for L-cysteine biosynthesis. The polypeptide is Thiosulfate sulfurtransferase GlpE (Pseudomonas aeruginosa (strain LESB58)).